A 406-amino-acid chain; its full sequence is MTQLPYLLDRRGGALAAPATAWGDMMLNRALFSVALLSSVGSAWVVLSYACIKELRSYRHQLILGLAISDLLMSLNFMFSAGWNVAGGDLALEESRTACSVNGFLTQVFVVQTDWWILVIAIATYIILGNFKTQSQFIQTHVWIPWVGPWVLSIIIAAICHGVLGYGYIGGWCWLTSDLMRLLINFIPRWLIVIAIALIYIRLYMIVRKARKWDIEGVSPDPGDDMADTSVILMSVGKKDRERQGSGVLVSRDVSVSFGRKGSTAPTFVTMVTTSGAGDSREAISSCSAREEGSRARTVNVNSSRSLSLGMRQPLNAAQLKRIAKKMMVYPVAYAIIWACPTAIRIYQGTTGSRAPLWITIVDKSCIVIQGLVDAVVYGLNERAWQGWRDHIRRIIYKNEGGRIIG.

Residues 1-29 lie on the Extracellular side of the membrane; sequence MTQLPYLLDRRGGALAAPATAWGDMMLNR. The chain crosses the membrane as a helical span at residues 30 to 50; sequence ALFSVALLSSVGSAWVVLSYA. Residues 51 to 61 lie on the Cytoplasmic side of the membrane; that stretch reads CIKELRSYRHQ. A helical membrane pass occupies residues 62–82; it reads LILGLAISDLLMSLNFMFSAG. At 83 to 107 the chain is on the extracellular side; it reads WNVAGGDLALEESRTACSVNGFLTQ. A disulfide bridge links C99 with C173. Residues 108–128 traverse the membrane as a helical segment; it reads VFVVQTDWWILVIAIATYIIL. At 129–143 the chain is on the cytoplasmic side; it reads GNFKTQSQFIQTHVW. A helical membrane pass occupies residues 144–164; that stretch reads IPWVGPWVLSIIIAAICHGVL. The Extracellular segment spans residues 165–185; that stretch reads GYGYIGGWCWLTSDLMRLLIN. The chain crosses the membrane as a helical span at residues 186-206; that stretch reads FIPRWLIVIAIALIYIRLYMI. Topologically, residues 207 to 326 are cytoplasmic; the sequence is VRKARKWDIE…AAQLKRIAKK (120 aa). Residues 327–347 traverse the membrane as a helical segment; that stretch reads MMVYPVAYAIIWACPTAIRIY. Residues 348–356 lie on the Extracellular side of the membrane; the sequence is QGTTGSRAP. Residues 357 to 377 form a helical membrane-spanning segment; the sequence is LWITIVDKSCIVIQGLVDAVV. Topologically, residues 378 to 406 are cytoplasmic; that stretch reads YGLNERAWQGWRDHIRRIIYKNEGGRIIG.

The protein belongs to the G-protein coupled receptor 1 family. Interacts with ascaroside receptor GPR3; may form a functional heterodimer. Interacts with guanine nucleotide-binding protein alpha GPA2; to activate adenylate cyclase and positively regulate nematode trap formation.

It localises to the cell membrane. Functionally, g protein-coupled receptor that senses nematode ascaroside pheromones and signals via adenylate cyclase to positively regulate trap formation for nematode capture. This Arthrobotrys oligospora (strain ATCC 24927 / CBS 115.81 / DSM 1491) (Nematode-trapping fungus) protein is Ascaroside receptor GPR2.